We begin with the raw amino-acid sequence, 346 residues long: Growth hormone-inducible transmembrane protein (346 aa).

The N-terminal 45 residues, 1-45 (MLAARLVCLRTLPSRVFQPTFITKASPLVKNSITKNQWLLTPSRE), are a transit peptide targeting the mitochondrion. Topologically, residues 46-83 (YATKTRIRTHRGKTGQELKEAALEPSLEKVFKIDQMGK) are mitochondrial matrix. A helical membrane pass occupies residues 84–104 (WFVAGGAAVGLGALCYYGLGM). Residues 105-126 (SNEIGAIEKAVIWPQYVKDRIH) lie on the Mitochondrial intermembrane side of the membrane. A helical transmembrane segment spans residues 127 to 147 (STYMYLAGSIGLTALSALALA). Residues 148–160 (RSPALMNFMMTGS) lie on the Mitochondrial matrix side of the membrane. A helical membrane pass occupies residues 161–181 (WMTIGATFAAMIGAGMLVQSI). Topologically, residues 182-191 (SYEQSPGPKH) are mitochondrial intermembrane. Residues 192 to 212 (LAWMLHSGVMGAVVAPLTILG) form a helical membrane-spanning segment. The Mitochondrial matrix portion of the chain corresponds to 213–214 (GP). A helical membrane pass occupies residues 215–235 (LLLRAAWYTAGIVGGLSTVAM). Residues 236 to 245 (CAPSEKFLNM) lie on the Mitochondrial intermembrane side of the membrane. The chain crosses the membrane as a helical span at residues 246–266 (GAPLGVGLGLVFASSLGSMFL). Topologically, residues 267–272 (PPTSVA) are mitochondrial matrix. Residues 273 to 293 (GATLYSVAMYGGLVLFSMFLL) traverse the membrane as a helical segment. At 294–346 (YDTQKVVKRAEITPAYGAQKYDPINSMLTIYMDTLNIFMRVATMLATGSNRKK) the chain is on the mitochondrial intermembrane side.

It belongs to the BI1 family. In terms of assembly, interacts with LETM1 and AFG3L2. Post-translationally, undergoes AFG3L2-mediated proteolytic degradation, upon hyperpolarization of mitochondria.

The protein localises to the mitochondrion inner membrane. Functionally, plays an important role in maintenance of mitochondrial morphology and in mediating either calcium or potassium/proton antiport. Mediates proton-dependent calcium efflux from mitochondrion. Also functions as an electroneutral mitochondrial proton/potassium exchanger. Required for the mitochondrial tubular network and cristae organization. Involved in apoptotic release of cytochrome c. Inhibits AFG3L2 proteolytic activity, stimulating respiration and stabilizing respiratory enzymes in actively respiring mitochondria. However, when mitochondria become hyperpolarized, GHITM loses its inhibitory activity toward AFG3L2 and the now active AFG3L2 turns first on GHITM and, if hyperpolarization persists, on other proteins of the mitochondria, leading to a broad remodeling of the proteome. In Rattus norvegicus (Rat), this protein is Growth hormone-inducible transmembrane protein (Ghitm).